Reading from the N-terminus, the 630-residue chain is Vacuolar protein 8 (630 aa).

G2 carries the N-myristoyl glycine lipid modification. ARM repeat units lie at residues 74–115, 117–156, 158–197, 199–238, 242–281, 283–322, 324–364, 408–447, and 456–495; these read EITE…NLAV, AENK…NLAT, DENK…NMTH, DENR…NIAV, NRKK…NLAS, SKYQ…NVSI, PANE…NLAA, DDLK…NLSS, and FNAV…QLLE. Disordered stretches follow at residues 519 to 558 and 572 to 630; these read AKSP…EGEG and EVGE…GRDR. The segment covering 543-558 has biased composition (acidic residues); the sequence is SEDEFEDGLTDQEGEG. Residues 598-607 are compositionally biased toward polar residues; that stretch reads GQGQTSQVGS.

It belongs to the beta-catenin family.

The protein localises to the vacuole membrane. In terms of biological role, functions in both vacuole inheritance and protein targeting from the cytoplasm to vacuole. In Cryptococcus neoformans var. neoformans serotype D (strain B-3501A) (Filobasidiella neoformans), this protein is Vacuolar protein 8 (VAC8).